Here is a 1248-residue protein sequence, read N- to C-terminus: Structural polyprotein (1248 aa).

Residues 1–10 are compositionally biased toward polar residues; the sequence is MEFIPTQTFY. The disordered stretch occupies residues 1–104; that stretch reads MEFIPTQTFY…KKKKPGRRER (104 aa). Residues 22-44 show a composition bias toward low complexity; the sequence is RPTIQVIRPRPRPQRQAGQLAQL. The segment at 36–68 is host transcription inhibition; sequence RQAGQLAQLISAVNKLTMRAVPQQKPRRNRKNK. The segment covering 60–72 has biased composition (basic residues); it reads KPRRNRKNKKQKQ. A Nuclear localization signal motif is present at residues 61-99; the sequence is PRRNRKNKKQKQKQQAPQNNTNQKKQPPKKKPAQKKKKP. Positions 73–85 are enriched in low complexity; that stretch reads KQQAPQNNTNQKK. The binding to the viral RNA stretch occupies residues 84-114; sequence KKQPPKKKPAQKKKKPGRRERMCMKIENDCI. Basic residues predominate over residues 86–101; it reads QPPKKKPAQKKKKPGR. The interval 99-113 is ribosome-binding; the sequence is PGRRERMCMKIENDC. A disulfide bridge links C113 with C128. A Peptidase S3 domain is found at 113–261; sequence CIFEVKHEGK…KITPEGAEEW (149 aa). The active-site Charge relay system is H139. The Nuclear export signal signature appears at 144-154; sequence IDNADLAKLAF. Positions 155-160 are interaction with spike glycoprotein E2; that stretch reads KRSSKY. The active-site Charge relay system is D161. Positions 183–193 are dimerization of the capsid protein; the sequence is PEGYYNWHHGA. S213 serves as the catalytic Charge relay system. Residues 219 to 223 form a dimerization of the capsid protein region; sequence DNKGR. The segment at 262 to 274 is functions as an uncleaved signal peptide for the precursor of protein E3/E2; the sequence is SLAIPVMCLLANT. At 262–692 the chain is on the extracellular side; the sequence is SLAIPVMCLL…YYYELYPTMT (431 aa). 9 disulfide bridges follow: C269-C278, C283-C287, C286-C318, C344-C450, C347-C353, C416-C430, C478-C591, C526-C550, and C528-C545. N273 carries an N-linked (GlcNAc...) asparagine; by host glycan. 2 interaction with host Mxra8 receptor regions span residues 351-354 and 387-389; these read HSCH and HDW. 2 interaction with host Mxra8 receptor regions span residues 509-512 and 541-547; these read QSGN and VINNCKV. N588 and N670 each carry an N-linked (GlcNAc...) asparagine; by host glycan. Residues 693–713 form a helical membrane-spanning segment; sequence VVVVSVASFILLSMVGMAVGM. Residues 714–748 are Cytoplasmic-facing; that stretch reads CMCARRRCITPYELTPGATVPFLLSLICCIRTAKA. Residues 716 to 720 are interaction with the capsid protein; it reads CARRR. S-palmitoyl cysteine; by host attachment occurs at residues C721, C741, and C742. Residues 721 to 741 are transient transmembrane before p62-6K protein processing; it reads CITPYELTPGATVPFLLSLIC. A disulfide bridge links C721 with C742. The Extracellular portion of the chain corresponds to 749–763; it reads ATYQEAAVYLWNEQQ. A helical transmembrane segment spans residues 764–784; sequence PLFWLQALIPLAALIVLCNCL. Residues 785-795 lie on the Cytoplasmic side of the membrane; it reads RLLPCCCKTLA. The helical transmembrane segment at 796–816 threads the bilayer; the sequence is FLAVMSIGAHTVSAYEHVTVI. The Extracellular segment spans residues 817–1224; the sequence is PNTVGVPYKT…AMSWVQKITG (408 aa). 4 cysteine pairs are disulfide-bonded: C858–C923, C871–C903, C872–C905, and C877–C887. The segment at 893–910 is E1 fusion peptide loop; sequence VYPFMWGGAYCFCDAENT. N-linked (GlcNAc...) asparagine; by host glycans are attached at residues N950 and N1079. Cystine bridges form between C1068-C1080, C1110-C1185, C1115-C1189, and C1137-C1179. Residues 1225 to 1245 form a helical membrane-spanning segment; the sequence is GVGLVVAVAALILIVVLCVSF. C1242 is lipidated: S-palmitoyl cysteine; by host. C1242 carries the S-stearoyl cysteine; by host lipid modification. Over 1246 to 1248 the chain is Cytoplasmic; sequence SRH.

This sequence belongs to the alphavirus structural polyprotein family. As to quaternary structure, homodimer. Homomultimer. Interacts with host karyopherin KPNA4; this interaction allows the nuclear import of the viral capsid protein. Interacts with spike glycoprotein E2. Interacts with host IRAK1; the interaction leads to inhibition of IRAK1-dependent signaling. In terms of assembly, the precursor of protein E3/E2 and E1 form a heterodimer shortly after synthesis. Interacts with spike glycoprotein E2. The precursor of protein E3/E2 and E1 form a heterodimer shortly after synthesis. Processing of the precursor of protein E3/E2 into E2 and E3 results in a heterodimer of the spike glycoproteins E2 and E1. Spike at virion surface are constituted of three E2-E1 heterodimers. After target cell attachment and endocytosis, E1 changes conformation to form homotrimers. Interacts with 6K protein. Interacts with host MXRA8; this interaction mediates virus entry. The interaction involves 2 adjacent E2-E1 heterodimers. As to quaternary structure, interacts with spike glycoprotein E1. Processing of the precursor of protein E3/E2 into E2 and E3 results in a heterodimer of the spike glycoproteins E2 and E1. Spike at virion surface are constituted of a trimer of E2-E1 heterodimers. Interacts with 6K protein. Interacts with host MXRA8; this interaction mediates virus entry. The interaction involves 2 adjacent E2-E1 heterodimers. In terms of assembly, oligomer. Interacts with spike glycoprotein E1. Interacts with spike glycoprotein E2. Specific enzymatic cleavages in vivo yield mature proteins. Capsid protein is auto-cleaved during polyprotein translation, unmasking a signal peptide at the N-terminus of the precursor of E3/E2. The remaining polyprotein is then targeted to the host endoplasmic reticulum, where host signal peptidase cleaves it into pE2, 6K and E1 proteins. pE2 is further processed to mature E3 and E2 by host furin in trans-Golgi vesicle. Post-translationally, palmitoylated via thioester bonds. These palmitoylations may induce disruption of the C-terminus transmembrane. This would result in the reorientation of E2 C-terminus from lumenal to cytoplasmic side. In terms of processing, N-glycosylated. Palmitoylated via thioester bonds.

The protein resides in the virion. Its subcellular location is the host cytoplasm. It is found in the host cell membrane. The protein localises to the host nucleus. It localises to the virion membrane. The protein resides in the host Golgi apparatus. Its subcellular location is the host trans-Golgi network. It is found in the host endoplasmic reticulum. It catalyses the reaction Autocatalytic release of the core protein from the N-terminus of the togavirus structural polyprotein by hydrolysis of a -Trp-|-Ser- bond.. Forms an icosahedral capsid with a T=4 symmetry composed of 240 copies of the capsid protein surrounded by a lipid membrane through which penetrate 80 spikes composed of trimers of E1-E2 heterodimers. The capsid protein binds to the viral RNA genome at a site adjacent to a ribosome binding site for viral genome translation following genome release. Possesses a protease activity that results in its autocatalytic cleavage from the nascent structural protein. Following its self-cleavage, the capsid protein transiently associates with ribosomes, and within several minutes the protein binds to viral RNA and rapidly assembles into icosahedric core particles. The resulting nucleocapsid eventually associates with the cytoplasmic domain of the spike glycoprotein E2 at the cell membrane, leading to budding and formation of mature virions. In case of infection, new virions attach to target cells and after clathrin-mediated endocytosis their membrane fuses with the host endosomal membrane. This leads to the release of the nucleocapsid into the cytoplasm, followed by an uncoating event necessary for the genomic RNA to become accessible. The uncoating might be triggered by the interaction of capsid proteins with ribosomes. Binding of ribosomes would release the genomic RNA since the same region is genomic RNA-binding and ribosome-binding. Specifically inhibits interleukin-1 receptor-associated kinase 1/IRAK1-dependent signaling during viral entry, representing a means by which the alphaviruses may evade innate immune detection and activation prior to viral gene expression. Degrades host cyclic GMP-AMP synthase (CGAS) thereby inhibiting the cGAS-STING pathway. Functionally, provides the signal sequence for the translocation of the precursor of protein E3/E2 to the host endoplasmic reticulum. Furin-cleaved E3 remains associated with spike glycoprotein E1 and mediates pH protection of the latter during the transport via the secretory pathway. After virion release from the host cell, the assembly protein E3 is gradually released in the extracellular space. In terms of biological role, plays a role in viral attachment to target host cell, by binding to the cell receptor MXRA8. Synthesized as a p62 precursor which is processed by furin at the cell membrane just before virion budding, giving rise to E2-E1 heterodimer. The p62-E1 heterodimer is stable, whereas E2-E1 is unstable and dissociate at low pH. p62 is processed at the last step, presumably to avoid E1 fusion activation before its final export to cell surface. E2 C-terminus contains a transitory transmembrane that would be disrupted by palmitoylation, resulting in reorientation of the C-terminal tail from lumenal to cytoplasmic side. This step is critical since E2 C-terminus is involved in budding by interacting with capsid proteins. This release of E2 C-terminus in cytoplasm occurs lately in protein export, and precludes premature assembly of particles at the endoplasmic reticulum membrane. Its function is as follows. Acts as a viroporin that participates in virus glycoprotein processing and transport to the plasma membrane, cell permeabilization and budding of viral particles. Disrupts the calcium homeostasis of the cell, probably at the endoplasmic reticulum level. This leads to cytoplasmic calcium elevation. Because of its lipophilic properties, the 6K protein is postulated to influence the selection of lipids that interact with the transmembrane domains of the glycoproteins, which, in turn, affects the deformability of the bilayer required for the extreme curvature that occurs as budding proceeds. Present in low amount in virions, about 3% compared to viral glycoproteins. Class II viral fusion protein. Fusion activity is inactive as long as E1 is bound to E2 in mature virion. After virus attachment to target cell and endocytosis, acidification of the endosome induce dissociation of E1/E2 heterodimer and concomitant trimerization of the E1 subunits. This E1 trimer is fusion active, and promotes release of viral nucleocapsid in cytoplasm after endosome and viral membrane fusion. Efficient fusion requires the presence of cholesterol and sphingolipid in the target membrane. This is Structural polyprotein from Chikungunya virus (strain S27-African prototype) (CHIKV).